A 219-amino-acid polypeptide reads, in one-letter code: MSDRQVRGVLGTKLGMTQLWDADNRIVPVTVVKVEPNVVTQIRTTTVDGYEAVQLATTAIAQRKATKPAAGHFEKAGVAPRRHLVELRTTDAADYSLGQEVTAEAFATGATVDVVGTTKGKGFAGVMKRHGFHGVGASHGAHRNHRKPGSIGGCATPGRVFKGMRMAGRMGAARQTTQNLTVQAVDAEKGLLLITGAIPGPRGGLVLVKSASKARVKEA.

The tract at residues 136-156 (GASHGAHRNHRKPGSIGGCAT) is disordered.

The protein belongs to the universal ribosomal protein uL3 family. In terms of assembly, part of the 50S ribosomal subunit. Forms a cluster with proteins L14 and L19.

Functionally, one of the primary rRNA binding proteins, it binds directly near the 3'-end of the 23S rRNA, where it nucleates assembly of the 50S subunit. This Kineococcus radiotolerans (strain ATCC BAA-149 / DSM 14245 / SRS30216) protein is Large ribosomal subunit protein uL3.